The chain runs to 256 residues: HTH-type transcriptional regulator PrtR (256 aa).

Residues 16–69 (LKQAMAMRNLKQETLAEAAGVSQNTIHKLTSGKAQSTRKLIEIAAALGVSPVWL) enclose the HTH cro/C1-type domain. A DNA-binding region (H-T-H motif) is located at residues 27-46 (QETLAEAAGVSQNTIHKLTS).

In terms of biological role, represses the promoter activity of the prtN gene. In Pseudomonas aeruginosa (strain ATCC 15692 / DSM 22644 / CIP 104116 / JCM 14847 / LMG 12228 / 1C / PRS 101 / PAO1), this protein is HTH-type transcriptional regulator PrtR (prtR).